Consider the following 566-residue polypeptide: Transmembrane protein 151B (566 aa).

A compositionally biased stretch (low complexity) spans 1–11 (MSPPGSAAGES). Positions 1-25 (MSPPGSAAGESAAGGGGGGGGPGVS) are disordered. The segment covering 12–23 (AAGGGGGGGGPG) has biased composition (gly residues). 2 consecutive transmembrane segments (helical) span residues 65-85 (CLLLSLLMYGCLGAVAWCHVT) and 112-132 (YVYIPLAFLLMLYAVYLVECW). Positions 495-512 (VNEASCPTEQTRLSSQAS) are enriched in polar residues. The segment at 495-529 (VNEASCPTEQTRLSSQASMGDDEDDDEEEAGPPPP) is disordered. A compositionally biased stretch (acidic residues) spans 514-524 (GDDEDDDEEEA).

Belongs to the TMEM151 family.

It localises to the membrane. This is Transmembrane protein 151B (TMEM151B) from Homo sapiens (Human).